The sequence spans 179 residues: Large ribosomal subunit protein uL5 (179 aa).

It belongs to the universal ribosomal protein uL5 family. In terms of assembly, part of the 50S ribosomal subunit; part of the 5S rRNA/L5/L18/L25 subcomplex. Contacts the 5S rRNA and the P site tRNA. Forms a bridge to the 30S subunit in the 70S ribosome.

This is one of the proteins that bind and probably mediate the attachment of the 5S RNA into the large ribosomal subunit, where it forms part of the central protuberance. In the 70S ribosome it contacts protein S13 of the 30S subunit (bridge B1b), connecting the 2 subunits; this bridge is implicated in subunit movement. Contacts the P site tRNA; the 5S rRNA and some of its associated proteins might help stabilize positioning of ribosome-bound tRNAs. The protein is Large ribosomal subunit protein uL5 of Paraburkholderia phymatum (strain DSM 17167 / CIP 108236 / LMG 21445 / STM815) (Burkholderia phymatum).